Here is an 85-residue protein sequence, read N- to C-terminus: Conotoxin Mi15b (85 aa).

Positions 1-23 are cleaved as a signal peptide; the sequence is MEKLTVLILVAIVLLTIQVLGQS. Residues 24-49 constitute a propeptide that is removed on maturation; the sequence is DRDKHPKRRPRQYATKRLSALMKGHR. Q50 is modified (pyrrolidone carboxylic acid).

This sequence belongs to the conotoxin O2 superfamily. In terms of processing, contains 4 disulfide bonds. In terms of tissue distribution, expressed by the venom duct.

The protein localises to the secreted. This chain is Conotoxin Mi15b, found in Conus miles (Soldier cone).